Reading from the N-terminus, the 2395-residue chain is Helicase ssl-1 (2395 aa).

Over residues 1-12 (MPATPVRASSTR) the composition is skewed to low complexity. The interval 1-62 (MPATPVRASS…EKKKKKTSDD (62 aa)) is disordered. Residues 227-300 (LPKCVEPERN…IKEKRKMCAG (74 aa)) enclose the HSA domain. The span at 354 to 363 (LVSSSKSPSI) shows a compositional bias: polar residues. Disordered stretches follow at residues 354 to 404 (LVSS…VRQE) and 444 to 504 (EKLE…HGVL). Basic and acidic residues-rich tracts occupy residues 365–375 (SDRDDKDEEFK), 394–404 (KSQKKEDVRQE), and 444–462 (EKLEEQKARKEACGDNEEK). Positions 388–464 (TIANAEKSQK…ACGDNEEKME (77 aa)) form a coiled coil. The segment covering 470 to 490 (SSDAQKPSTSSSDLTAEQLQD) has biased composition (polar residues). The region spanning 570–735 (VTLYEKNLNG…WSLMHFLMPT (166 aa)) is the Helicase ATP-binding domain. Residue 583–590 (DEMGLGKT) participates in ATP binding. The disordered stretch occupies residues 963-982 (AQPLQNGNSIPQNAPNRPQT). One can recognise a Helicase C-terminal domain in the interval 1196-1342 (LLRQLYLYKH…ELAIDEAGFT (147 aa)). A coiled-coil region spans residues 1452–1476 (KPEFEEECKEAEALIDQKREEWDKN). Disordered regions lie at residues 1615–1706 (ESAA…EEPD), 1977–2073 (SIQH…RRNA), 2092–2143 (QSGK…PQQR), 2276–2306 (QMRSNNGGGVGGQGGLQGGPGGPQGIRRPLV), and 2350–2395 (MQMP…PPQN). 2 stretches are compositionally biased toward low complexity: residues 1647-1669 (QQPTTTATTTTTVPQQQQQQQQQ) and 1981-1995 (LQSSSTGLGSQQNLQ). Over residues 1996 to 2019 (NSHNSEQRNNVQNMHQNQYNSSQN) the composition is skewed to polar residues. Composition is skewed to low complexity over residues 2051 to 2073 (LVQQGSQQQQQQQQQATLQRRNA) and 2092 to 2114 (QSGKNCGQGQSFVVMGSQSSSND). Over residues 2115-2129 (GQGGASTVGGGGGGS) the composition is skewed to gly residues. The segment covering 2130–2142 (QQPHQQQQQQPQQ) has biased composition (low complexity). Gly residues predominate over residues 2281-2299 (NGGGVGGQGGLQGGPGGPQ). Residues 2361 to 2377 (QQQAPPQSSQQASQQAP) show a composition bias toward low complexity.

It belongs to the SNF2/RAD54 helicase family. SWR1 subfamily.

It localises to the nucleus. In terms of biological role, probable catalytic component of a chromatin-remodeling complex which mediates the ATP-dependent exchange of histone H2A variant H2AV/htz-1 for H2A, leading to transcriptional regulation of selected genes by chromatin remodeling. Involved in foregut development, and may be involved in vulval development. This chain is Helicase ssl-1 (ssl-1), found in Caenorhabditis elegans.